The chain runs to 139 residues: Transcription antitermination protein NusB (139 aa).

Belongs to the NusB family.

Its function is as follows. Involved in transcription antitermination. Required for transcription of ribosomal RNA (rRNA) genes. Binds specifically to the boxA antiterminator sequence of the ribosomal RNA (rrn) operons. The polypeptide is Transcription antitermination protein NusB (Lactiplantibacillus plantarum (strain ATCC BAA-793 / NCIMB 8826 / WCFS1) (Lactobacillus plantarum)).